A 440-amino-acid polypeptide reads, in one-letter code: tRNA-2-methylthio-N(6)-dimethylallyladenosine synthase (440 aa).

Positions 5–121 constitute an MTTase N-terminal domain; sequence KKLYIKTYGC…LPEMEAKAGT (117 aa). Residues Cys-14, Cys-50, Cys-84, Cys-159, Cys-163, and Cys-166 each coordinate [4Fe-4S] cluster. The 234-residue stretch at 145 to 378 folds into the Radical SAM core domain; sequence AKRGPTAFLT…LTRQQREVQD (234 aa). A TRAM domain is found at 378-440; it reads DSMVGRELGV…ANSLAGELID (63 aa).

The protein belongs to the methylthiotransferase family. MiaB subfamily. As to quaternary structure, monomer. [4Fe-4S] cluster is required as a cofactor.

The protein resides in the cytoplasm. It catalyses the reaction N(6)-dimethylallyladenosine(37) in tRNA + (sulfur carrier)-SH + AH2 + 2 S-adenosyl-L-methionine = 2-methylsulfanyl-N(6)-dimethylallyladenosine(37) in tRNA + (sulfur carrier)-H + 5'-deoxyadenosine + L-methionine + A + S-adenosyl-L-homocysteine + 2 H(+). Functionally, catalyzes the methylthiolation of N6-(dimethylallyl)adenosine (i(6)A), leading to the formation of 2-methylthio-N6-(dimethylallyl)adenosine (ms(2)i(6)A) at position 37 in tRNAs that read codons beginning with uridine. The sequence is that of tRNA-2-methylthio-N(6)-dimethylallyladenosine synthase from Ruegeria sp. (strain TM1040) (Silicibacter sp.).